A 1399-amino-acid chain; its full sequence is DNA-directed RNA polymerase subunit beta' (1399 aa).

4 residues coordinate Zn(2+): Cys70, Cys72, Cys85, and Cys88. Asp460, Asp462, and Asp464 together coordinate Mg(2+). Positions 814, 888, 895, and 898 each coordinate Zn(2+).

Belongs to the RNA polymerase beta' chain family. The RNAP catalytic core consists of 2 alpha, 1 beta, 1 beta' and 1 omega subunit. When a sigma factor is associated with the core the holoenzyme is formed, which can initiate transcription. The cofactor is Mg(2+). Zn(2+) is required as a cofactor.

The enzyme catalyses RNA(n) + a ribonucleoside 5'-triphosphate = RNA(n+1) + diphosphate. Functionally, DNA-dependent RNA polymerase catalyzes the transcription of DNA into RNA using the four ribonucleoside triphosphates as substrates. This is DNA-directed RNA polymerase subunit beta' from Pseudomonas putida (strain W619).